The primary structure comprises 519 residues: Cell adhesion molecule CEACAM1 (519 aa).

Residues 1–34 (MELASARLLRGQIPWRGLLLTASLLTYWSPLTTA) form the signal peptide. Glutamine 35 is subject to Pyrrolidone carboxylic acid. The Extracellular portion of the chain corresponds to 35 to 425 (QVTVDAVPPN…QGNSGLSEGA (391 aa)). The interval 39–142 (DAVPPNVVEE…QTSVQFRVYP (104 aa)) is required for homophilic binding. In terms of domain architecture, Ig-like V-type spans 42–140 (PPNVVEEKSV…PIQTSVQFRV (99 aa)). N-linked (GlcNAc...) asparagine glycans are attached at residues asparagine 87, asparagine 104, asparagine 113, asparagine 148, asparagine 152, asparagine 173, asparagine 197, asparagine 224, asparagine 256, asparagine 288, asparagine 292, asparagine 302, asparagine 315, and asparagine 331. Ig-like C2-type domains lie at 147–232 (PNVT…FNLD), 237–317 (PDAP…KNIT), and 325–403 (PSIQ…FRIS). Cysteines 167 and 215 form a disulfide. An intrachain disulfide couples cysteine 259 to cysteine 299. A disulfide bond links cysteine 344 and cysteine 392. The N-linked (GlcNAc...) asparagine; atypical glycan is linked to asparagine 374. Residues 426–446 (IAGIVIGSVAGVALIAALAYF) form a helical membrane-spanning segment. Residues 445–457 (YFLYSRKTGGGSD) form an interaction with calmodulin region. The Cytoplasmic portion of the chain corresponds to 447–519 (LYSRKTGGGS…ETVYSVVKKK (73 aa)). Residues 447 to 519 (LYSRKTGGGS…ETVYSVVKKK (73 aa)) form an interaction with FLNA region. The segment at 455-519 (GSDHRDLTEH…ETVYSVVKKK (65 aa)) is disordered. Over residues 456–466 (SDHRDLTEHKP) the composition is skewed to basic and acidic residues. The segment at 484-519 (DDVSYSVLNFNAQQSKRPTSASSSPTETVYSVVKKK) is required for interaction with PTPN11 and PTPN6 and for control of phosphorylation level. Tyrosine 488 bears the Phosphotyrosine; by SRC, LCK, INSR and EGFR mark. Over residues 489–512 (SVLNFNAQQSKRPTSASSSPTETV) the composition is skewed to polar residues. Serine 503 is modified (phosphoserine). The residue at position 513 (tyrosine 513) is a Phosphotyrosine; by INSR, SRC and LCK. Residues 513 to 516 (YSVV) form an essential for interaction with PTPN11 and PTPN6 region.

It belongs to the immunoglobulin superfamily. CEA family. Monomer. Oligomer. Heterodimer. Homodimer. Cis-dimer/oligomer (via Ig-like C2-type and/or via cytoplasmic domains); induced by trans-homophilic cell adhesion through an allosteric mechanism transmitted by the Ig-like V-type domain, and is regulated by intracellular calcium and calmodulin. Interacts (via cytoplasmic domain) with calmodulin in a calcium dependent manner; reduces homophilic cell adhesion through dissociation of dimer. Isoform 1 interacts (via cytoplasmic domain) with PTPN11 (preferentially) and PTPN6; cis-homodimer form is preferred; this interaction is decreased by formation of isoform 1 / isoform 2 cis-heterodimers and is dependent on the monomer/dimer equilibrium; this interaction is phosphorylation-dependent. Isoform 1 interacts with LYN. Isoform 1 interacts (via cytoplasmic domain) with SRC (via SH2 domain); this interaction is regulated by trans-homophilic cell adhesion. Isoform 1 interacts (via cytoplasmic domain) with LCK; mediates phosphorylation at Tyr-488 and Tyr-513 resulting in PTPN6 association. Isoform 1 interacts with PTPN6; this interaction is phosphorylation-dependent and causes a profound decrease in TCR stimulation-induced CD247 and ZAP70 phosphorylation. Isoform 1 interacts with TCR/CD3 complex through TCR beta chain and CD3E; colocalizes at the cell surface and upon stimulation of the TCR/CD3 complex recruits PTPN6 in the TCR/CD3 complex, resulting in dephosphorylation of CD247 and ZAP70. Isoform 1 interacts (via cytoplasmic domain) with SHC1 (via SH2 domain); SHC1 mediates interaction with INSR or EGFR in a Ser-503 phosphorylation-dependent manner. Isoform 1 interacts with EGFR; the interaction is indirect. Isoform 1 interacts with CSF3R; down-regulates the CSF3R-STAT3 pathway through recruitment of PTPN6 that dephosphorylates CSF3R. Isoform 1 (phosphorylated form) interacts with TLR4 and SYK; recruits PTPN6 that dephosphorylates SYK, reducing the production of reactive oxygen species (ROS) and lysosome disruption, leading to a reduction of the inflammasome activity. Isoform 1 interacts with FLNA; inhibits cell migration and cell scattering by interfering with the interaction of FLNA with RALA. Isoform 1 interacts (via cytoplasmic domain) with PXN; the interaction is phosphotyrosyl-dependent. Isoform 1 interacts with KLRK1; recruits PTPN6 that dephosphorylates VAV1. Isoform 1 interacts with CEACAM8. Isoform 1 interacts with FASN; this interaction is insulin and phosphorylation-dependent; reduces fatty-acid synthase activity. Interacts (via Ig-like V-type) with HAVCR2 (via Ig-like V-type); facilitates the maturation and cell surface expression of HAVCR2 thereby regulating T-cell tolerance induction. Isoform 2 interacts (via the cytoplasmic domain) with ANXA2; this interaction is regulated by phosphorylation and appears in the AIIt complex. Interacts (via Lewis X moieties) with CD209 (via C-type lectin domain); this interaction is regulated by the glycosylation pattern of CEACAM1 on cell types and regulates contact between dendritic cells and neutrophils. In terms of processing, phosphorylated on serine and tyrosine. Isoform 1 is phosphorylated on tyrosine by Src family kinases like SRC and LCK and by receptor like CSF3R, EGFR and INSR upon stimulation. Phosphorylated at Ser-503; mediates activity. Phosphorylated at Tyr-488; regulates activity. Phosphorylated at Tyr-488 by EGFR and INSR upon stimulation; this phosphorylation is Ser-503-phosphorylation-dependent; mediates cellular internalization; increases interaction with FASN. Phosphorylated at Tyr-488 and Tyr-513 by LCK; mediates PTPN6 association and is regulated by homophilic ligation of CEACAM1 in the absence of T-cell activation. Phosphorylated at Tyr-513; mediates interaction with PTPN11. Phosphorylated on serine and threonine. As to expression, expressed in epithelia, vessel endothelia, leukocytes and platelets. Isoform 1 and isoform 2 are highly expressed in liver and intestine, moderately in lung, and weakly in muscle, kidney, and spleen. Expressed in granulocytes, lymphocytes, granulocytes, B cells, and T-cells.

The protein resides in the cell membrane. Its subcellular location is the lateral cell membrane. It localises to the apical cell membrane. It is found in the basal cell membrane. The protein localises to the cell junction. The protein resides in the adherens junction. Its subcellular location is the cytoplasmic vesicle. It localises to the secretory vesicle. It is found in the cell projection. The protein localises to the microvillus membrane. Functionally, cell adhesion protein that mediates homophilic cell adhesion in a calcium-independent manner. Plays a role as coinhibitory receptor in immune response, insulin action and also functions as an activator during angiogenesis. Its coinhibitory receptor function is phosphorylation- and PTPN6 -dependent, which in turn, suppress signal transduction of associated receptors by dephosphorylation of their downstream effectors. Plays a role in immune response, of T-cells, natural killer (NK) and neutrophils. Upon TCR/CD3 complex stimulation, inhibits TCR-mediated cytotoxicity by blocking granule exocytosis by mediating homophilic binding to adjacent cells, allowing interaction with and phosphorylation by LCK and interaction with the TCR/CD3 complex which recruits PTPN6 resulting in dephosphorylation of CD247 and ZAP70. Also inhibits T-cell proliferation and cytokine production through inhibition of JNK cascade and plays a crucial role in regulating autoimmunity and anti-tumor immunity by inhibiting T-cell through its interaction with HAVCR2. Upon natural killer (NK) cells activation, inhibit KLRK1-mediated cytolysis of CEACAM1-bearing tumor cells by trans-homophilic interactions with CEACAM1 on the target cell and lead to cis-interaction between CEACAM1 and KLRK1, allowing PTPN6 recruitment and then VAV1 dephosphorylation. Upon neutrophils activation negatively regulates IL1B production by recruiting PTPN6 to a SYK-TLR4-CEACAM1 complex, that dephosphorylates SYK, reducing the production of reactive oxygen species (ROS) and lysosome disruption, which in turn, reduces the activity of the inflammasome. Down-regulates neutrophil production by acting as a coinhibitory receptor for CSF3R by downregulating the CSF3R-STAT3 pathway through recruitment of PTPN6 that dephosphorylates CSF3R. Also regulates insulin action by promoting INS clearance and regulating lipogenesis in liver through regulating insulin signaling. Upon INS stimulation, undergoes phosphorylation by INSR leading to INS clearance by increasing receptor-mediated insulin endocytosis. This inernalization promotes interaction with FASN leading to receptor-mediated insulin degradation and to reduction of FASN activity leading to negative regulation of fatty acid synthesis. INSR-mediated phosphorylation also provokes a down-regulation of cell proliferation through SHC1 interaction resulting in decrease coupling of SHC1 to the MAPK3/ERK1-MAPK1/ERK2 and phosphatidylinositol 3-kinase pathways. Functions as activator in angiogenesis by promoting blood vessel remodeling through endothelial cell differentiation and migration and in arteriogenesis by increasing the number of collateral arteries and collateral vessel calibers after ischemia. Also regulates vascular permeability through the VEGFR2 signaling pathway resulting in control of nitric oxide production. Down-regulates cell growth in response to EGF through its interaction with SHC1 that mediates interaction with EGFR resulting in decrease coupling of SHC1 to the MAPK3/ERK1-MAPK1/ERK2 pathway. Negatively regulates platelet aggregation by decreasing platelet adhesion on type I collagen through the GPVI-FcRgamma complex. Inhibits cell migration and cell scattering through interaction with FLNA; interferes with the interaction of FLNA with RALA. Mediates bile acid transport activity in a phosphorylation dependent manner. Negatively regulates osteoclastogenesis. Its function is as follows. Cell adhesion proteins that mediates homophilic cell adhesion in a calcium-independent manner. Promotes populations of T-cells regulating IgA production and secretion associated with control of the commensal microbiota and resistance to enteropathogens. The chain is Cell adhesion molecule CEACAM1 from Rattus norvegicus (Rat).